The sequence spans 534 residues: Glucan endo-1,3-beta-glucosidase 12 (534 aa).

The signal sequence occupies residues 1 to 24 (MGQRLNLVFWIFVSILAFLNFGMA). Catalysis depends on Glu-120, which acts as the Proton donor. Asn-127 carries an N-linked (GlcNAc...) asparagine glycan. The Nucleophile role is filled by Glu-264. Asn-336, Asn-357, and Asn-375 each carry an N-linked (GlcNAc...) asparagine glycan. The interval 348 to 379 (ENTTPVSPTNSTTGTSPSPSSSPIINGNSTVT) is disordered. Low complexity predominate over residues 349–377 (NTTPVSPTNSTTGTSPSPSSSPIINGNST). Cysteines 392 and 455 form a disulfide. Asn-485, Asn-491, and Asn-495 each carry an N-linked (GlcNAc...) asparagine glycan. The GPI-anchor amidated serine moiety is linked to residue Ser-507. Residues 508–534 (STNEAFRQMVVAVSVLLPCFVVCSSIW) constitute a propeptide, removed in mature form.

Belongs to the glycosyl hydrolase 17 family. Post-translationally, contains two additional disulfide bonds.

The protein resides in the secreted. The protein localises to the cell wall. It localises to the cell membrane. The catalysed reaction is Hydrolysis of (1-&gt;3)-beta-D-glucosidic linkages in (1-&gt;3)-beta-D-glucans.. In Arabidopsis thaliana (Mouse-ear cress), this protein is Glucan endo-1,3-beta-glucosidase 12.